Consider the following 316-residue polypeptide: Methionyl-tRNA formyltransferase (316 aa).

109–112 is a (6S)-5,6,7,8-tetrahydrofolate binding site; that stretch reads SALP.

It belongs to the Fmt family.

It catalyses the reaction L-methionyl-tRNA(fMet) + (6R)-10-formyltetrahydrofolate = N-formyl-L-methionyl-tRNA(fMet) + (6S)-5,6,7,8-tetrahydrofolate + H(+). In terms of biological role, attaches a formyl group to the free amino group of methionyl-tRNA(fMet). The formyl group appears to play a dual role in the initiator identity of N-formylmethionyl-tRNA by promoting its recognition by IF2 and preventing the misappropriation of this tRNA by the elongation apparatus. This Nocardioides sp. (strain ATCC BAA-499 / JS614) protein is Methionyl-tRNA formyltransferase.